The chain runs to 215 residues: Protein slowmo (215 aa).

Positions 1–170 (MKIWTSEHIF…VIGLINTEVK (170 aa)) constitute a PRELI/MSF1 domain.

Belongs to the slowmo family. As to expression, expressed in specific tissues such as the developing central nervous system (CNS) and both the male and female germline. In the CNS, it is restricted in a subset of cells during embryogenesis and early larval development. In embryos, it is also expressed in salivary glands. In the testis, expressed in somatic cyst cells throughout the distal region where the mitotic cysts develop, extending through to meiotic cysts.

It is found in the mitochondrion. In terms of biological role, required to regulate peristaltic movement and also for germline proliferation in males and females. In Drosophila melanogaster (Fruit fly), this protein is Protein slowmo (slmo).